A 380-amino-acid polypeptide reads, in one-letter code: Cytochrome b (380 aa).

4 consecutive transmembrane segments (helical) span residues 34-54, 78-99, 114-134, and 179-199; these read FGSLLGICLLTQILTGLLLAT, WLIRNLHANGASFFFICIYLHI, WNTGVILLLALMATAFVGYVL, and FFALHFLLPFMIAGLAFIHLT. Heme b-binding residues include H84 and H98. Positions 183 and 197 each coordinate heme b. H202 contributes to the a ubiquinone binding site. Transmembrane regions (helical) follow at residues 227-247, 289-309, 321-341, and 348-368; these read LKDILGFIIMFLPLTTLALFS, LGGVLALAASVLVLFLTPLLH, LSQLLFWTLVANLLILTWVGS, and FIIIGQLASLTYFTILLLLFP.

It belongs to the cytochrome b family. The cytochrome bc1 complex contains 11 subunits: 3 respiratory subunits (MT-CYB, CYC1 and UQCRFS1), 2 core proteins (UQCRC1 and UQCRC2) and 6 low-molecular weight proteins (UQCRH/QCR6, UQCRB/QCR7, UQCRQ/QCR8, UQCR10/QCR9, UQCR11/QCR10 and a cleavage product of UQCRFS1). This cytochrome bc1 complex then forms a dimer. Heme b serves as cofactor.

The protein localises to the mitochondrion inner membrane. Component of the ubiquinol-cytochrome c reductase complex (complex III or cytochrome b-c1 complex) that is part of the mitochondrial respiratory chain. The b-c1 complex mediates electron transfer from ubiquinol to cytochrome c. Contributes to the generation of a proton gradient across the mitochondrial membrane that is then used for ATP synthesis. In Uria aalge (Common mure), this protein is Cytochrome b (MT-CYB).